The chain runs to 462 residues: uncharacterized protein (462 aa).

2 helical membrane-spanning segments follow: residues 12 to 32 (WWWLTFGCARTVTVGFVAPTV) and 257 to 277 (GLCVDLLVCVLLLALLLLELV).

Belongs to the HHV-5 US29 protein family.

The protein resides in the host membrane. This is an uncharacterized protein from Homo sapiens (Human).